The sequence spans 509 residues: Probable cytochrome P450 4ac3 (509 aa).

C454 lines the heme pocket.

Belongs to the cytochrome P450 family. Requires heme as cofactor.

The protein localises to the endoplasmic reticulum membrane. It localises to the microsome membrane. Its function is as follows. May be involved in the metabolism of insect hormones and in the breakdown of synthetic insecticides. The chain is Probable cytochrome P450 4ac3 (Cyp4ac3) from Drosophila melanogaster (Fruit fly).